A 210-amino-acid chain; its full sequence is MSNNVEEKILHGTTTVGIKATDGVVLCADMRASAGYFIANNNTMKIQRIDDHAGLTLAGGVADAQNIVDVLRYHASLHRIRKQGPIPIKSLARLTSLIFHQNRGYPFMADILMGGFDAVGPALYNIDMFGSVEEKSYVTTGSGSPVAYGTLEEEYRADLTADEAKGVALRAVKAAITRNIGTGDGINVAVINGNGFELLTREQKKAVIAL.

Residues 1-12 (MSNNVEEKILHG) constitute a propeptide, removed in mature form; by autocatalysis. The active-site Nucleophile is the T13.

It belongs to the peptidase T1B family. As to quaternary structure, the 20S proteasome core is composed of 14 alpha and 14 beta subunits that assemble into four stacked heptameric rings, resulting in a barrel-shaped structure. The two inner rings, each composed of seven catalytic beta subunits, are sandwiched by two outer rings, each composed of seven alpha subunits. The catalytic chamber with the active sites is on the inside of the barrel. Has a gated structure, the ends of the cylinder being occluded by the N-termini of the alpha-subunits. Is capped at one or both ends by the proteasome regulatory ATPase, PAN.

It is found in the cytoplasm. The catalysed reaction is Cleavage of peptide bonds with very broad specificity.. With respect to regulation, the formation of the proteasomal ATPase PAN-20S proteasome complex, via the docking of the C-termini of PAN into the intersubunit pockets in the alpha-rings, triggers opening of the gate for substrate entry. Interconversion between the open-gate and close-gate conformations leads to a dynamic regulation of the 20S proteasome proteolysis activity. Functionally, component of the proteasome core, a large protease complex with broad specificity involved in protein degradation. The polypeptide is Proteasome subunit beta 2 (Cenarchaeum symbiosum (strain A)).